We begin with the raw amino-acid sequence, 259 residues long: Thiazole synthase (259 aa).

The active-site Schiff-base intermediate with DXP is the Lys-98. 1-deoxy-D-xylulose 5-phosphate contacts are provided by residues Gly-159, 185 to 186 (AG), and 207 to 208 (NS).

It belongs to the ThiG family. In terms of assembly, homotetramer. Forms heterodimers with either ThiH or ThiS.

Its subcellular location is the cytoplasm. It carries out the reaction [ThiS sulfur-carrier protein]-C-terminal-Gly-aminoethanethioate + 2-iminoacetate + 1-deoxy-D-xylulose 5-phosphate = [ThiS sulfur-carrier protein]-C-terminal Gly-Gly + 2-[(2R,5Z)-2-carboxy-4-methylthiazol-5(2H)-ylidene]ethyl phosphate + 2 H2O + H(+). It participates in cofactor biosynthesis; thiamine diphosphate biosynthesis. Functionally, catalyzes the rearrangement of 1-deoxy-D-xylulose 5-phosphate (DXP) to produce the thiazole phosphate moiety of thiamine. Sulfur is provided by the thiocarboxylate moiety of the carrier protein ThiS. In vitro, sulfur can be provided by H(2)S. In Chlorobaculum tepidum (strain ATCC 49652 / DSM 12025 / NBRC 103806 / TLS) (Chlorobium tepidum), this protein is Thiazole synthase.